We begin with the raw amino-acid sequence, 463 residues long: ATP-dependent protease ATPase subunit HslU (463 aa).

ATP is bound by residues isoleucine 19, glycine 61–glutamate 66, aspartate 277, glutamate 341, and arginine 413.

This sequence belongs to the ClpX chaperone family. HslU subfamily. In terms of assembly, a double ring-shaped homohexamer of HslV is capped on each side by a ring-shaped HslU homohexamer. The assembly of the HslU/HslV complex is dependent on binding of ATP.

It is found in the cytoplasm. Its function is as follows. ATPase subunit of a proteasome-like degradation complex; this subunit has chaperone activity. The binding of ATP and its subsequent hydrolysis by HslU are essential for unfolding of protein substrates subsequently hydrolyzed by HslV. HslU recognizes the N-terminal part of its protein substrates and unfolds these before they are guided to HslV for hydrolysis. The polypeptide is ATP-dependent protease ATPase subunit HslU (Bacillus cereus (strain 03BB102)).